Reading from the N-terminus, the 415-residue chain is Multifunctional CCA protein (415 aa).

Positions 8 and 11 each coordinate ATP. The CTP site is built by G8 and R11. Mg(2+) is bound by residues D21 and D23. Positions 91, 143, and 146 each coordinate ATP. 3 residues coordinate CTP: R91, R143, and R146. One can recognise an HD domain in the interval 232-333; sequence TGVHVMMVID…VRLLERCDAL (102 aa).

This sequence belongs to the tRNA nucleotidyltransferase/poly(A) polymerase family. Bacterial CCA-adding enzyme type 1 subfamily. As to quaternary structure, monomer. Can also form homodimers and oligomers. The cofactor is Mg(2+). Ni(2+) is required as a cofactor.

The catalysed reaction is a tRNA precursor + 2 CTP + ATP = a tRNA with a 3' CCA end + 3 diphosphate. The enzyme catalyses a tRNA with a 3' CCA end + 2 CTP + ATP = a tRNA with a 3' CCACCA end + 3 diphosphate. Its function is as follows. Catalyzes the addition and repair of the essential 3'-terminal CCA sequence in tRNAs without using a nucleic acid template. Adds these three nucleotides in the order of C, C, and A to the tRNA nucleotide-73, using CTP and ATP as substrates and producing inorganic pyrophosphate. tRNA 3'-terminal CCA addition is required both for tRNA processing and repair. Also involved in tRNA surveillance by mediating tandem CCA addition to generate a CCACCA at the 3' terminus of unstable tRNAs. While stable tRNAs receive only 3'-terminal CCA, unstable tRNAs are marked with CCACCA and rapidly degraded. This Cupriavidus taiwanensis (strain DSM 17343 / BCRC 17206 / CCUG 44338 / CIP 107171 / LMG 19424 / R1) (Ralstonia taiwanensis (strain LMG 19424)) protein is Multifunctional CCA protein.